The chain runs to 61 residues: Small ribosomal subunit protein uS14 (61 aa).

Residues Cys24, Cys27, Cys40, and Cys43 each coordinate Zn(2+).

This sequence belongs to the universal ribosomal protein uS14 family. Zinc-binding uS14 subfamily. Part of the 30S ribosomal subunit. Contacts proteins S3 and S10. It depends on Zn(2+) as a cofactor.

Functionally, binds 16S rRNA, required for the assembly of 30S particles and may also be responsible for determining the conformation of the 16S rRNA at the A site. The protein is Small ribosomal subunit protein uS14 of Symbiobacterium thermophilum (strain DSM 24528 / JCM 14929 / IAM 14863 / T).